A 116-amino-acid polypeptide reads, in one-letter code: Mercuric transport protein MerT (116 aa).

2 consecutive transmembrane segments (helical) span residues 16-36 (LAAI…ALGF) and 46-66 (VLEP…FFAW). Residues Cys24 and Cys25 each contribute to the Hg(2+) site. 2 residues coordinate Hg(2+): Cys76 and Cys82. Residues 94 to 114 (IFWVVAALVLVALGFPYVMPF) traverse the membrane as a helical segment.

The protein belongs to the MerT family.

Its subcellular location is the cell inner membrane. Its function is as follows. Involved in mercury resistance. Probably transfers a mercuric ion from the periplasmic Hg(2+)-binding protein MerP to the cytoplasmic mercuric reductase MerA. This Serratia marcescens protein is Mercuric transport protein MerT.